Here is a 185-residue protein sequence, read N- to C-terminus: MKCLYILSGHTDRIYSTIYDHERKRCISASMDTTIRIWDLENIRNNGECSYATNSASPCAKILGAMYTLRGHRALVGLLGLSDKFLVSASVDGSIRCWDANTYFLKHFFDHTQLNTITALHVSDEVLVSGSEGLLNIYDLNSGLLVRSDTLSGADNVWNVSFKDNTLVAAVERDKRNLLEILDFS.

WD repeat units follow at residues 9–48 (GHTDRIYSTIYDHERKRCISASMDTTIRIWDLENIRNNGE), 71–108 (GHRALVGLLGLSDKFLVSASVDGSIRCWDANTYFLKHF), and 111–148 (HTQLNTITALHVSDEVLVSGSEGLLNIYDLNSGLLVRS).

In terms of biological role, may be involved in the modulation of rDNA transcription. In Saccharomyces cerevisiae (strain ATCC 204508 / S288c) (Baker's yeast), this protein is Regulator of rDNA transcription protein 13 (RRT13).